Consider the following 295-residue polypeptide: Pyridoxal 5'-phosphate synthase subunit PdxS (295 aa).

D25 contributes to the D-ribose 5-phosphate binding site. The active-site Schiff-base intermediate with D-ribose 5-phosphate is the K82. G154 serves as a coordination point for D-ribose 5-phosphate. R166 serves as a coordination point for D-glyceraldehyde 3-phosphate. D-ribose 5-phosphate contacts are provided by residues G215 and 236 to 237 (GS).

It belongs to the PdxS/SNZ family. In the presence of PdxT, forms a dodecamer of heterodimers.

It carries out the reaction aldehydo-D-ribose 5-phosphate + D-glyceraldehyde 3-phosphate + L-glutamine = pyridoxal 5'-phosphate + L-glutamate + phosphate + 3 H2O + H(+). It participates in cofactor biosynthesis; pyridoxal 5'-phosphate biosynthesis. Catalyzes the formation of pyridoxal 5'-phosphate from ribose 5-phosphate (RBP), glyceraldehyde 3-phosphate (G3P) and ammonia. The ammonia is provided by the PdxT subunit. Can also use ribulose 5-phosphate and dihydroxyacetone phosphate as substrates, resulting from enzyme-catalyzed isomerization of RBP and G3P, respectively. This is Pyridoxal 5'-phosphate synthase subunit PdxS from Staphylococcus haemolyticus (strain JCSC1435).